Here is a 138-residue protein sequence, read N- to C-terminus: Holo-[acyl-carrier-protein] synthase (138 aa).

Asp-8 and Glu-54 together coordinate Mg(2+).

Belongs to the P-Pant transferase superfamily. AcpS family. The cofactor is Mg(2+).

It is found in the cytoplasm. It catalyses the reaction apo-[ACP] + CoA = holo-[ACP] + adenosine 3',5'-bisphosphate + H(+). In terms of biological role, transfers the 4'-phosphopantetheine moiety from coenzyme A to a Ser of acyl-carrier-protein. In Roseiflexus sp. (strain RS-1), this protein is Holo-[acyl-carrier-protein] synthase.